A 575-amino-acid chain; its full sequence is Regulatory protein zeste (575 aa).

Residues 1–26 (MSAQGEGGGAGGSGGGGAGSDGGGNA) are compositionally biased toward gly residues. 2 disordered regions span residues 1–53 (MSAQ…LPLT) and 151–174 (SVAS…VKVE). The hydrophobic stretch occupies residues 2 to 47 (SAQGEGGGAGGSGGGGAGSDGGGNAGQSSTGSGTVAVTNGGNSSAK). Positions 31–51 (TGSGTVAVTNGGNSSAKNQLP) are enriched in polar residues. Residues 48–128 (NQLPLTPRFT…WLNSRLRKQY (81 aa)) mediate DNA binding. The segment covering 151 to 164 (SVASAVPQQQQQQH) has biased composition (low complexity).

In terms of assembly, self-associates forming complexes of several hundred monomers.

The protein localises to the nucleus. Involved in transvection phenomena (= synapsis-dependent gene expression), where the synaptic pairing of chromosomes carrying genes with which zeste interacts influences the expression of these genes. Zeste binds to DNA and stimulates transcription from a nearby promoter. The sequence is that of Regulatory protein zeste (z) from Drosophila melanogaster (Fruit fly).